The sequence spans 100 residues: Small ribosomal subunit protein uS14c (100 aa).

This sequence belongs to the universal ribosomal protein uS14 family. Part of the 30S ribosomal subunit.

The protein resides in the plastid. The protein localises to the chloroplast. In terms of biological role, binds 16S rRNA, required for the assembly of 30S particles. The polypeptide is Small ribosomal subunit protein uS14c (Angiopteris evecta (Mule's foot fern)).